A 223-amino-acid chain; its full sequence is Glutathione-specific gamma-glutamylcyclotransferase 1 (223 aa).

The tract at residues 1–26 (MKQESASQSTPPPSLSPAPSSAQPSW) is disordered. 36 to 41 (IFGYGS) provides a ligand contact to substrate. The Proton acceptor role is filled by Glu116.

Belongs to the gamma-glutamylcyclotransferase family. ChaC subfamily. In terms of assembly, interacts with NOTCH1 (via extracellular region). As to expression, widely expressed, with high expression in forebrain and anterior spinal cord. Expressed at intermediate level in the dorsal aorta and heart. Present throughout adult brain (at protein level).

It is found in the cytoplasm. Its subcellular location is the cytosol. It localises to the golgi apparatus. The protein localises to the trans-Golgi network. It catalyses the reaction glutathione = L-cysteinylglycine + 5-oxo-L-proline. In terms of biological role, catalyzes the cleavage of glutathione into 5-oxo-L-proline and a Cys-Gly dipeptide. Acts specifically on glutathione, but not on other gamma-glutamyl peptides. Glutathione depletion is an important factor for apoptosis initiation and execution. Acts as a pro-apoptotic component of the unfolded protein response pathway by mediating the pro-apoptotic effects of the ATF4-ATF3-DDIT3/CHOP cascade. Negative regulator of Notch signaling pathway involved in embryonic neurogenesis: acts by inhibiting Notch cleavage by furin, maintaining Notch in an immature inactive form, thereby promoting neurogenesis in embryos. In Mus musculus (Mouse), this protein is Glutathione-specific gamma-glutamylcyclotransferase 1.